The primary structure comprises 566 residues: MOB kinase activator-like 2 (566 aa).

2 disordered regions span residues 28–57 (ADAT…SSLS) and 74–118 (GRAV…GAQA). Residues 35–57 (SSTAPQTPTASTPRPSSSHSSLS) show a composition bias toward low complexity. Residues 85–115 (QNGGKGNASGAGGGAGGGGAGGASGGTGGTG) are compositionally biased toward gly residues. Zn(2+) is bound by residues Cys209, Cys214, His289, and His294. Disordered regions lie at residues 346–407 (GGCQ…SASA) and 498–541 (FSNN…QCNA). The span at 367-388 (LQHQSLQQQQQHHNSSSNSTSS) shows a compositional bias: low complexity. Residues 394-407 (VNSQSNNGSTSASA) are compositionally biased toward polar residues. The span at 498–507 (FSNNNNNNHN) shows a compositional bias: low complexity. Residues 508–526 (LNHHHHHHHHHGHHGHHHA) show a composition bias toward basic residues.

This sequence belongs to the MOB1/phocein family. As to quaternary structure, interacts with and activates trc, also interacts with wts.

The protein localises to the cytoplasm. It is found in the nucleus. Required for the normal morphogenesis of a variety of polarized outgrowths including epidermal hairs, bristles, arista laterals, and dendrites. The sequence is that of MOB kinase activator-like 2 (Mob2) from Drosophila melanogaster (Fruit fly).